The following is an 892-amino-acid chain: Translation initiation factor IF-2 (892 aa).

2 disordered regions span residues 144–176 (QQRL…QKTE) and 189–298 (SNSV…SGAH). A compositionally biased stretch (low complexity) spans 207–219 (LPRTVRPTPAARP). Residues 391–560 (PRPPVVTIMG…SIQAEVLELK (170 aa)) form the tr-type G domain. GTP is bound by residues 400–407 (GHVDHGKT), 446–450 (DTPGH), and 500–503 (SKID).

Belongs to the TRAFAC class translation factor GTPase superfamily. Classic translation factor GTPase family. IF-2 subfamily.

It localises to the cytoplasm. Functionally, one of the essential components for the initiation of protein synthesis. Protects formylmethionyl-tRNA from spontaneous hydrolysis and promotes its binding to the 30S ribosomal subunits. Also involved in the hydrolysis of GTP during the formation of the 70S ribosomal complex. The polypeptide is Translation initiation factor IF-2 (Xylella fastidiosa (strain M12)).